The primary structure comprises 117 residues: Putative small ubiquitin-related modifier 6 (117 aa).

Positions 1 to 30 (MSTKSSSIHGRNEVKMEGEKRKDVESESTH) are disordered. Basic and acidic residues predominate over residues 10-28 (GRNEVKMEGEKRKDVESES). The Ubiquitin-like domain occupies 31 to 108 (VTLNVKGQDE…IDALLPQESG (78 aa)). G108 participates in a covalent cross-link: Glycyl lysine isopeptide (Gly-Lys) (interchain with K-? in acceptor proteins).

It belongs to the ubiquitin family. SUMO subfamily. As to quaternary structure, interacts with SAE2, SCE1, SIZ1 and MMS21 Covalently attached to a number of proteins.

The protein resides in the nucleus. Its subcellular location is the cytoplasm. Its function is as follows. Ubiquitin-like protein which can be covalently attached to target lysines as a monomer. Does not seem to be involved in protein degradation and may function as an antagonist of ubiquitin in the degradation process. This is Putative small ubiquitin-related modifier 6 (SUMO6) from Arabidopsis thaliana (Mouse-ear cress).